The sequence spans 186 residues: Peptidyl-tRNA hydrolase (186 aa).

Tyr-14 lines the tRNA pocket. His-19 functions as the Proton acceptor in the catalytic mechanism. Residues Tyr-64, Asn-66, and Asn-112 each contribute to the tRNA site.

Belongs to the PTH family. Monomer.

The protein localises to the cytoplasm. The enzyme catalyses an N-acyl-L-alpha-aminoacyl-tRNA + H2O = an N-acyl-L-amino acid + a tRNA + H(+). Functionally, hydrolyzes ribosome-free peptidyl-tRNAs (with 1 or more amino acids incorporated), which drop off the ribosome during protein synthesis, or as a result of ribosome stalling. Its function is as follows. Catalyzes the release of premature peptidyl moieties from peptidyl-tRNA molecules trapped in stalled 50S ribosomal subunits, and thus maintains levels of free tRNAs and 50S ribosomes. The protein is Peptidyl-tRNA hydrolase of Geobacillus kaustophilus (strain HTA426).